Reading from the N-terminus, the 64-residue chain is Large ribosomal subunit protein bL28 (64 aa).

Positions 1-21 (MAKKDQLTLRGPLYGNNRSHS) are disordered.

The protein belongs to the bacterial ribosomal protein bL28 family.

This chain is Large ribosomal subunit protein bL28, found in Mycoplasma genitalium (strain ATCC 33530 / DSM 19775 / NCTC 10195 / G37) (Mycoplasmoides genitalium).